We begin with the raw amino-acid sequence, 157 residues long: Large ribosomal subunit protein uL15 (157 aa).

Residues 1–56 form a disordered region; sequence MRLEDIRPQPGSTRRRRRLGRGIAAGQGASCGKGMRGQKARKGGGPRPGFEGGQTP. The segment covering 23 to 35 has biased composition (gly residues); it reads IAAGQGASCGKGM.

It belongs to the universal ribosomal protein uL15 family. Part of the 50S ribosomal subunit.

Its function is as follows. Binds to the 23S rRNA. The chain is Large ribosomal subunit protein uL15 from Synechococcus sp. (strain JA-3-3Ab) (Cyanobacteria bacterium Yellowstone A-Prime).